We begin with the raw amino-acid sequence, 310 residues long: uncharacterized protein (310 aa).

The protein belongs to the YiaX1 family.

This is an uncharacterized protein from Salmonella typhimurium (strain LT2 / SGSC1412 / ATCC 700720).